Consider the following 180-residue polypeptide: Cytochrome b6-f complex iron-sulfur subunit 2 (180 aa).

A helical membrane pass occupies residues 21–43 (LLTFGTITGVAAGALYPAVKYLI). One can recognise a Rieske domain in the interval 66–162 (VTEFLASHNA…ATVTDDDKLV (97 aa)). Residues Cys-108, His-110, Cys-126, and His-129 each contribute to the [2Fe-2S] cluster site. A disulfide bridge links Cys-113 with Cys-128.

The protein belongs to the Rieske iron-sulfur protein family. In terms of assembly, the 4 large subunits of the cytochrome b6-f complex are cytochrome b6, subunit IV (17 kDa polypeptide, PetD), cytochrome f and the Rieske protein, while the 4 small subunits are PetG, PetL, PetM and PetN. The complex functions as a dimer. [2Fe-2S] cluster serves as cofactor.

Its subcellular location is the cellular thylakoid membrane. It carries out the reaction 2 oxidized [plastocyanin] + a plastoquinol + 2 H(+)(in) = 2 reduced [plastocyanin] + a plastoquinone + 4 H(+)(out). Functionally, component of the cytochrome b6-f complex, which mediates electron transfer between photosystem II (PSII) and photosystem I (PSI), cyclic electron flow around PSI, and state transitions. The sequence is that of Cytochrome b6-f complex iron-sulfur subunit 2 from Synechocystis sp. (strain ATCC 27184 / PCC 6803 / Kazusa).